Reading from the N-terminus, the 156-residue chain is RING finger protein 224 (156 aa).

The RING-type zinc finger occupies 24 to 71 (CIICCSAYDLSGHLPRRLYCGHTFCQACVRRLDTPAPEQRWIPCPQCR).

This Homo sapiens (Human) protein is RING finger protein 224 (RNF224).